Reading from the N-terminus, the 273-residue chain is Glutamate 5-kinase (273 aa).

Lysine 15 lines the ATP pocket. Substrate contacts are provided by serine 55, aspartate 142, and asparagine 158. ATP contacts are provided by residues 178-179 (SD) and 220-226 (TGGMLSK).

This sequence belongs to the glutamate 5-kinase family.

The protein localises to the cytoplasm. The enzyme catalyses L-glutamate + ATP = L-glutamyl 5-phosphate + ADP. Its pathway is amino-acid biosynthesis; L-proline biosynthesis; L-glutamate 5-semialdehyde from L-glutamate: step 1/2. Catalyzes the transfer of a phosphate group to glutamate to form L-glutamate 5-phosphate. This Streptococcus pyogenes serotype M49 (strain NZ131) protein is Glutamate 5-kinase.